We begin with the raw amino-acid sequence, 216 residues long: Phosphoenolpyruvate guanylyltransferase (216 aa).

Positions 143, 159, and 162 each coordinate phosphoenolpyruvate.

It belongs to the CofC family.

It catalyses the reaction phosphoenolpyruvate + GTP + H(+) = enolpyruvoyl-2-diphospho-5'-guanosine + diphosphate. It participates in cofactor biosynthesis; coenzyme F420 biosynthesis. In terms of biological role, guanylyltransferase that catalyzes the activation of phosphoenolpyruvate (PEP) as enolpyruvoyl-2-diphospho-5'-guanosine, via the condensation of PEP with GTP. It is involved in the biosynthesis of coenzyme F420, a hydride carrier cofactor. This Streptomyces scabiei (strain 87.22) protein is Phosphoenolpyruvate guanylyltransferase.